The primary structure comprises 380 residues: Anhydro-N-acetylmuramic acid kinase (380 aa).

ATP is bound at residue Gly9–Asp16.

The protein belongs to the anhydro-N-acetylmuramic acid kinase family.

It catalyses the reaction 1,6-anhydro-N-acetyl-beta-muramate + ATP + H2O = N-acetyl-D-muramate 6-phosphate + ADP + H(+). The protein operates within amino-sugar metabolism; 1,6-anhydro-N-acetylmuramate degradation. It functions in the pathway cell wall biogenesis; peptidoglycan recycling. In terms of biological role, catalyzes the specific phosphorylation of 1,6-anhydro-N-acetylmuramic acid (anhMurNAc) with the simultaneous cleavage of the 1,6-anhydro ring, generating MurNAc-6-P. Is required for the utilization of anhMurNAc either imported from the medium or derived from its own cell wall murein, and thus plays a role in cell wall recycling. This is Anhydro-N-acetylmuramic acid kinase from Cyanothece sp. (strain PCC 7425 / ATCC 29141).